The primary structure comprises 41 residues: Photosystem II reaction center protein Y (41 aa).

The chain crosses the membrane as a helical span at residues 5–23 (VLIVLAPVIIAGSWALFNI).

Belongs to the PsbY family. In terms of assembly, PSII is composed of 1 copy each of membrane proteins PsbA, PsbB, PsbC, PsbD, PsbE, PsbF, PsbH, PsbI, PsbJ, PsbK, PsbL, PsbM, PsbT, PsbX, PsbY, PsbZ, Psb30/Ycf12, peripheral proteins PsbO, CyanoQ (PsbQ), PsbU, PsbV and a large number of cofactors. It forms dimeric complexes.

The protein resides in the cellular thylakoid membrane. Loosely associated component of the core of photosystem II (PSII), it is not always seen in crystals. PSII is a light-driven water plastoquinone oxidoreductase, using light energy to abstract electrons from H(2)O, generating a proton gradient subsequently used for ATP formation. The sequence is that of Photosystem II reaction center protein Y from Gloeothece citriformis (strain PCC 7424) (Cyanothece sp. (strain PCC 7424)).